The chain runs to 261 residues: Cytochrome c oxidase subunit 3 (261 aa).

The Mitochondrial matrix segment spans residues Met1–Pro15. Residues Trp16–Trp34 traverse the membrane as a helical segment. At Phe35–Met40 the chain is on the mitochondrial intermembrane side. A helical membrane pass occupies residues Ser41 to Thr66. The Mitochondrial matrix portion of the chain corresponds to Phe67–Thr72. The chain crosses the membrane as a helical span at residues Pro73–Ser105. Residues Leu106–Glu128 are Mitochondrial intermembrane-facing. The chain crosses the membrane as a helical span at residues Val129–Met152. Over Glu153–Asn155 the chain is Mitochondrial matrix. A helical transmembrane segment spans residues Arg156–Glu183. Topologically, residues Thr184–Asp190 are mitochondrial intermembrane. A helical membrane pass occupies residues Gly191–Leu223. At Tyr224 to His232 the chain is on the mitochondrial matrix side. The helical transmembrane segment at Phe233–Ile256 threads the bilayer. The Mitochondrial intermembrane portion of the chain corresponds to Tyr257–Ser261.

It belongs to the cytochrome c oxidase subunit 3 family. In terms of assembly, component of the cytochrome c oxidase (complex IV, CIV), a multisubunit enzyme composed of 14 subunits. The complex is composed of a catalytic core of 3 subunits MT-CO1, MT-CO2 and MT-CO3, encoded in the mitochondrial DNA, and 11 supernumerary subunits COX4I, COX5A, COX5B, COX6A, COX6B, COX6C, COX7A, COX7B, COX7C, COX8 and NDUFA4, which are encoded in the nuclear genome. The complex exists as a monomer or a dimer and forms supercomplexes (SCs) in the inner mitochondrial membrane with NADH-ubiquinone oxidoreductase (complex I, CI) and ubiquinol-cytochrome c oxidoreductase (cytochrome b-c1 complex, complex III, CIII), resulting in different assemblies (supercomplex SCI(1)III(2)IV(1) and megacomplex MCI(2)III(2)IV(2)).

It is found in the mitochondrion inner membrane. It catalyses the reaction 4 Fe(II)-[cytochrome c] + O2 + 8 H(+)(in) = 4 Fe(III)-[cytochrome c] + 2 H2O + 4 H(+)(out). Functionally, component of the cytochrome c oxidase, the last enzyme in the mitochondrial electron transport chain which drives oxidative phosphorylation. The respiratory chain contains 3 multisubunit complexes succinate dehydrogenase (complex II, CII), ubiquinol-cytochrome c oxidoreductase (cytochrome b-c1 complex, complex III, CIII) and cytochrome c oxidase (complex IV, CIV), that cooperate to transfer electrons derived from NADH and succinate to molecular oxygen, creating an electrochemical gradient over the inner membrane that drives transmembrane transport and the ATP synthase. Cytochrome c oxidase is the component of the respiratory chain that catalyzes the reduction of oxygen to water. Electrons originating from reduced cytochrome c in the intermembrane space (IMS) are transferred via the dinuclear copper A center (CU(A)) of subunit 2 and heme A of subunit 1 to the active site in subunit 1, a binuclear center (BNC) formed by heme A3 and copper B (CU(B)). The BNC reduces molecular oxygen to 2 water molecules using 4 electrons from cytochrome c in the IMS and 4 protons from the mitochondrial matrix. This is Cytochrome c oxidase subunit 3 (MT-CO3) from Canis lupus (Gray wolf).